The sequence spans 137 residues: Fluoride-specific ion channel FluC 1 (137 aa).

Transmembrane regions (helical) follow at residues 4–24 (LIYIIVGIAGILGALSRYYLG), 37–57 (LATLLINLAGCFLLAWLTTYI), 67–87 (VITGIGTGFIGSFTTFSTFSV), and 100–120 (IAFLYVSCSILGGLIMSGLGY). Residues G77 and T80 each contribute to the Na(+) site.

This sequence belongs to the fluoride channel Fluc/FEX (TC 1.A.43) family.

The protein resides in the cell membrane. It catalyses the reaction fluoride(in) = fluoride(out). Its activity is regulated as follows. Na(+) is not transported, but it plays an essential structural role and its presence is essential for fluoride channel function. In terms of biological role, fluoride-specific ion channel. Important for reducing fluoride concentration in the cell, thus reducing its toxicity. The sequence is that of Fluoride-specific ion channel FluC 1 from Bacillus thuringiensis subsp. konkukian (strain 97-27).